We begin with the raw amino-acid sequence, 281 residues long: Probable endonuclease 4 (281 aa).

9 residues coordinate Zn(2+): His70, His110, Glu146, Asp180, His183, His217, Asp230, His232, and Glu262.

The protein belongs to the AP endonuclease 2 family. Zn(2+) is required as a cofactor.

It carries out the reaction Endonucleolytic cleavage to 5'-phosphooligonucleotide end-products.. Endonuclease IV plays a role in DNA repair. It cleaves phosphodiester bonds at apurinic or apyrimidinic (AP) sites, generating a 3'-hydroxyl group and a 5'-terminal sugar phosphate. The chain is Probable endonuclease 4 from Nitratiruptor sp. (strain SB155-2).